The chain runs to 149 residues: Calmodulin-3 (149 aa).

At Ala-2 the chain carries N-acetylalanine. EF-hand domains lie at Asp-8–Asn-43, Pro-44–Asp-79, Asp-81–Lys-116, and Leu-117–Lys-149. Positions 21, 23, 25, 27, 32, 57, 59, 61, 63, 68, 94, 96, 98, and 105 each coordinate Ca(2+). Lys-116 is subject to N6,N6,N6-trimethyllysine. The Ca(2+) site is built by Asp-130, Asp-132, Asp-134, Gln-136, and Glu-141.

The protein belongs to the calmodulin family.

Calmodulin mediates the control of a large number of enzymes, ion channels and other proteins by Ca(2+). Among the enzymes to be stimulated by the calmodulin-Ca(2+) complex are a number of protein kinases and phosphatases. This is Calmodulin-3 (CAM3) from Oryza sativa subsp. indica (Rice).